Reading from the N-terminus, the 262-residue chain is Ribosomal RNA small subunit methyltransferase A (262 aa).

Positions 13, 15, 40, 61, 85, and 105 each coordinate S-adenosyl-L-methionine.

It belongs to the class I-like SAM-binding methyltransferase superfamily. rRNA adenine N(6)-methyltransferase family. RsmA subfamily.

It localises to the cytoplasm. The catalysed reaction is adenosine(1518)/adenosine(1519) in 16S rRNA + 4 S-adenosyl-L-methionine = N(6)-dimethyladenosine(1518)/N(6)-dimethyladenosine(1519) in 16S rRNA + 4 S-adenosyl-L-homocysteine + 4 H(+). Its function is as follows. Specifically dimethylates two adjacent adenosines (A1518 and A1519) in the loop of a conserved hairpin near the 3'-end of 16S rRNA in the 30S particle. May play a critical role in biogenesis of 30S subunits. This chain is Ribosomal RNA small subunit methyltransferase A, found in Laribacter hongkongensis (strain HLHK9).